A 270-amino-acid polypeptide reads, in one-letter code: Gap junction beta-3 protein (270 aa).

Topologically, residues 1–20 (MDWKTLQALLSGVNKYSTAF) are cytoplasmic. Residues 21–40 (GRIWLSVVFVFRVLVYVVAA) traverse the membrane as a helical segment. Residues 41–75 (ERVWGDEQKDFDCNTKQPGCTNVCYDNYFPISNIR) lie on the Extracellular side of the membrane. The chain crosses the membrane as a helical span at residues 76 to 98 (LWALQLIFVTCPSLLVILHVAYR). Over 99–126 (EERERRHRQKHGDQCAKLYDNAGKKHGG) the chain is Cytoplasmic. A helical transmembrane segment spans residues 127–149 (LWWTYLFSLIFKLIIEFLFLYLL). The Extracellular portion of the chain corresponds to 150-187 (HTLWHGFNMPRLVQCANVAPCPNIVDCYIARPTEKKIF). Residues 188-210 (TYFMVGASAVCIVLTICELCYLI) form a helical membrane-spanning segment. Residues 211 to 270 (CHRVLRGLHKDKPRGGCSPSSSASRASTCRCHHKLVEAGEVDPDPGNNKLQASAPNLTPI) lie on the Cytoplasmic side of the membrane. Positions 250-270 (EVDPDPGNNKLQASAPNLTPI) are disordered. The span at 258-270 (NKLQASAPNLTPI) shows a compositional bias: polar residues.

Belongs to the connexin family. Beta-type (group I) subfamily. As to quaternary structure, a connexon is composed of a hexamer of connexins. Interacts with CNST.

The protein localises to the cell membrane. It is found in the cell junction. Its subcellular location is the gap junction. One gap junction consists of a cluster of closely packed pairs of transmembrane channels, the connexons, through which materials of low MW diffuse from one cell to a neighboring cell. The polypeptide is Gap junction beta-3 protein (GJB3) (Homo sapiens (Human)).